A 61-amino-acid polypeptide reads, in one-letter code: Peroxidase 1 (61 aa).

The tract at residues 1 to 32 is disordered; the sequence is DNTAKEKDSPANLSLRTCAAGDNAEQPLDPSR. A glycan (N-linked (GlcNAc...) asparagine) is linked at asparagine 12. Ca(2+)-binding residues include aspartate 29, serine 31, and aspartate 36.

This sequence belongs to the peroxidase family. Classical plant (class III) peroxidase subfamily. Ca(2+) is required as a cofactor. It depends on heme b as a cofactor.

The protein localises to the secreted. It catalyses the reaction 2 a phenolic donor + H2O2 = 2 a phenolic radical donor + 2 H2O. Removal of H(2)O(2), oxidation of toxic reductants, biosynthesis and degradation of lignin, suberization, auxin catabolism, response to environmental stresses such as wounding, pathogen attack and oxidative stress. These functions might be dependent on each isozyme/isoform in each plant tissue. This chain is Peroxidase 1, found in Vitis rotundifolia (Muscadine grape).